We begin with the raw amino-acid sequence, 631 residues long: KIF-binding protein (631 aa).

The segment covering 60–70 has biased composition (acidic residues); that stretch reads EQGEAGDEADC. The segment at 60–88 is disordered; the sequence is EQGEAGDEADCESSQTADGEPEDGFEKTF.

The protein belongs to the KIF-binding protein family. In terms of tissue distribution, at 30 hpf, primarily expressed in central and peripheral neurons.

The protein localises to the cytoplasm. It localises to the cytoskeleton. Functionally, activator of KIF1B plus-end-directed microtubule motor activity. Required for organization of axonal microtubules, and axonal outgrowth and maintenance during peripheral and central nervous system development. This Danio rerio (Zebrafish) protein is KIF-binding protein (kifbp).